Here is an 824-residue protein sequence, read N- to C-terminus: MEEKYLPSRVEEKWQKFWEANKSFRATEDKTREKYYLLEMFPYPSGRIHMGHVRNYSIGDVIARFKRMKGFNVLHPMGWDAFGMPAENAAIQNKSHPAKWTYENIAYMRGQLKKMGLSYDWDRELATCDVDYYKWEQLIFLQMYKKGLAYKKISSVNWCPKCETVLANEQVEDGCCWRCDSNVDQKELEQWSFRITDYAEELLEYTYKLPGWPERVLTMQRNWIGRSTGCEIDFPIEGQMDKIKVFTTRQDTLFGATFMSLAPEHPMALELTTPENMATVAAFIEKVKKTDRIRRTAEDFEKEGVFTGSYCINPVTNRRMPVYLANFVLTDYGTGAVMAVPTHDQRDFEFARKYDIPMGVVIQPEGEALDPQTMAEAFTAEGIMVNSGRFDGLKSGAAKEQIADYLEKEGIGKKTVNYRLRDWGISRQRYWGNPIPMIYCDLCGAVPVPETDLPVVLPMDATFTGEGGNPLDKVDSFVNTTCPQCGEAARRETDTMDTFVESSWYFLRYCCPDFVSGPLDKEKTEYWMSVDQYIGGIEHAVMHLLYARFFTKVLRDLGYCDIDEPFTNLLTQGMVIKDGAKMSKSKGNVVDPNALIDKYGADTARLFSLFAAPPEKDLDWSDQGVDGSFRFLNRVWKLVYDTLPIIGGAGALDPAGLTNEGKGLRRQVHKTIRKVTEDIEERFHFNTAIAATMELVNTIQSFEPKNSPQNAPVLKEAIESVVMLLAPFVPHFTEELWAQLGNNKSLEQAGWPAFDSAAAIDEELLVVVQVNGKLRGKLTVAVTASEDDVKGAALADERVKPFIEGKSVKKIVYVPGKLVNIVVG.

The short motif at 42 to 52 (PYPSGRIHMGH) is the 'HIGH' region element. A 'KMSKS' region motif is present at residues 581 to 585 (KMSKS). ATP is bound at residue Lys-584.

Belongs to the class-I aminoacyl-tRNA synthetase family.

The protein localises to the cytoplasm. It carries out the reaction tRNA(Leu) + L-leucine + ATP = L-leucyl-tRNA(Leu) + AMP + diphosphate. This chain is Leucine--tRNA ligase, found in Geotalea uraniireducens (strain Rf4) (Geobacter uraniireducens).